Here is a 74-residue protein sequence, read N- to C-terminus: NAD(P)H-quinone oxidoreductase subunit L (74 aa).

Transmembrane regions (helical) follow at residues 5-25 and 43-63; these read LIIAALYLALAGAYLLVVPAA and AFMYFLVFFFFPGLLLLAPLL.

It belongs to the complex I NdhL subunit family. As to quaternary structure, NDH-1 can be composed of about 15 different subunits; different subcomplexes with different compositions have been identified which probably have different functions.

The protein resides in the cellular thylakoid membrane. It carries out the reaction a plastoquinone + NADH + (n+1) H(+)(in) = a plastoquinol + NAD(+) + n H(+)(out). It catalyses the reaction a plastoquinone + NADPH + (n+1) H(+)(in) = a plastoquinol + NADP(+) + n H(+)(out). In terms of biological role, NDH-1 shuttles electrons from an unknown electron donor, via FMN and iron-sulfur (Fe-S) centers, to quinones in the respiratory and/or the photosynthetic chain. The immediate electron acceptor for the enzyme in this species is believed to be plastoquinone. Couples the redox reaction to proton translocation, and thus conserves the redox energy in a proton gradient. Cyanobacterial NDH-1 also plays a role in inorganic carbon-concentration. The sequence is that of NAD(P)H-quinone oxidoreductase subunit L from Synechococcus elongatus (strain ATCC 33912 / PCC 7942 / FACHB-805) (Anacystis nidulans R2).